The primary structure comprises 459 residues: tRNA modification GTPase MnmE (459 aa).

Arg-24, Glu-82, and Lys-122 together coordinate (6S)-5-formyl-5,6,7,8-tetrahydrofolate. Residues 219-379 enclose the TrmE-type G domain; that stretch reads GIKVVISGAP…LRQHLYFSFK (161 aa). Residues 229-234, 248-254, and 273-276 each bind GTP; these read NSGKSS, TNFPGTT, and DTAG. Positions 233 and 254 each coordinate Mg(2+). Lys-459 is a binding site for (6S)-5-formyl-5,6,7,8-tetrahydrofolate.

This sequence belongs to the TRAFAC class TrmE-Era-EngA-EngB-Septin-like GTPase superfamily. TrmE GTPase family. In terms of assembly, homodimer. Heterotetramer of two MnmE and two MnmG subunits. The cofactor is K(+).

It localises to the cytoplasm. Its function is as follows. Exhibits a very high intrinsic GTPase hydrolysis rate. Involved in the addition of a carboxymethylaminomethyl (cmnm) group at the wobble position (U34) of certain tRNAs, forming tRNA-cmnm(5)s(2)U34. The polypeptide is tRNA modification GTPase MnmE (Buchnera aphidicola subsp. Baizongia pistaciae (strain Bp)).